Consider the following 608-residue polypeptide: Glutamyl-tRNA(Gln) amidotransferase subunit E (608 aa).

The segment at 402 to 422 is disordered; sequence EETRGANPDGTTRFLRPRPGA.

It belongs to the GatB/GatE family. GatE subfamily. Heterodimer of GatD and GatE.

The enzyme catalyses L-glutamyl-tRNA(Gln) + L-glutamine + ATP + H2O = L-glutaminyl-tRNA(Gln) + L-glutamate + ADP + phosphate + H(+). Its function is as follows. Allows the formation of correctly charged Gln-tRNA(Gln) through the transamidation of misacylated Glu-tRNA(Gln) in organisms which lack glutaminyl-tRNA synthetase. The reaction takes place in the presence of glutamine and ATP through an activated gamma-phospho-Glu-tRNA(Gln). The GatDE system is specific for glutamate and does not act on aspartate. This is Glutamyl-tRNA(Gln) amidotransferase subunit E from Pyrobaculum calidifontis (strain DSM 21063 / JCM 11548 / VA1).